Reading from the N-terminus, the 310-residue chain is Urease accessory protein UreD (310 aa).

This sequence belongs to the UreD family. UreD, UreF and UreG form a complex that acts as a GTP-hydrolysis-dependent molecular chaperone, activating the urease apoprotein by helping to assemble the nickel containing metallocenter of UreC. The UreE protein probably delivers the nickel.

The protein localises to the cytoplasm. Functionally, required for maturation of urease via the functional incorporation of the urease nickel metallocenter. This is Urease accessory protein UreD from Synechococcus sp. (strain RCC307).